The primary structure comprises 256 residues: Thiazole synthase (256 aa).

K95 (schiff-base intermediate with DXP) is an active-site residue. 1-deoxy-D-xylulose 5-phosphate-binding positions include G156, 182 to 183 (AG), and 204 to 205 (NT).

This sequence belongs to the ThiG family. As to quaternary structure, homotetramer. Forms heterodimers with either ThiH or ThiS.

It localises to the cytoplasm. It carries out the reaction [ThiS sulfur-carrier protein]-C-terminal-Gly-aminoethanethioate + 2-iminoacetate + 1-deoxy-D-xylulose 5-phosphate = [ThiS sulfur-carrier protein]-C-terminal Gly-Gly + 2-[(2R,5Z)-2-carboxy-4-methylthiazol-5(2H)-ylidene]ethyl phosphate + 2 H2O + H(+). It participates in cofactor biosynthesis; thiamine diphosphate biosynthesis. Functionally, catalyzes the rearrangement of 1-deoxy-D-xylulose 5-phosphate (DXP) to produce the thiazole phosphate moiety of thiamine. Sulfur is provided by the thiocarboxylate moiety of the carrier protein ThiS. In vitro, sulfur can be provided by H(2)S. This Alteromonas mediterranea (strain DSM 17117 / CIP 110805 / LMG 28347 / Deep ecotype) protein is Thiazole synthase.